We begin with the raw amino-acid sequence, 408 residues long: Putative UPF0496 protein 2 (408 aa).

2 helical membrane passes run 224–244 (RIAR…AIVA) and 252–272 (ALVG…GAAR). The disordered stretch occupies residues 385–408 (MARGLPPPSPATVTTTSEERLTSS).

Belongs to the UPF0496 family.

The protein resides in the membrane. The chain is Putative UPF0496 protein 2 from Oryza sativa subsp. indica (Rice).